A 198-amino-acid chain; its full sequence is Inner membrane-spanning protein YciB (198 aa).

A run of 5 helical transmembrane segments spans residues 36 to 56 (IYSA…ALFI), 67 to 87 (LTLI…SETF), 90 to 110 (WKAP…HFIG), 135 to 155 (IAWI…AFTF), and 162 to 182 (FKVF…GIYL).

The protein belongs to the YciB family.

The protein localises to the cell inner membrane. Plays a role in cell envelope biogenesis, maintenance of cell envelope integrity and membrane homeostasis. The sequence is that of Inner membrane-spanning protein YciB from Pseudomonas fluorescens (strain Pf0-1).